Reading from the N-terminus, the 482-residue chain is MSPQTETKASVGFKAGVKDYKLNYYTPEYKPQDTDILAAFRVTPQPGVPSEEAGAAVAAESSTGTWTTVWTDGLTSLDRYKGRCYHIDPVAGEDNQYICYVAYPLDLFEEGSVTNMFTSIVGNVFGFKALRALRLEDLRIPIAYIKTFQGPPHGIQVERDKLNKYGRPLLGCTIKPKLGLSAKNYGRAVYECLRGGLDFTKDDENVNSQPFMRWRDRLLFCAEALYKAQAETGEIKGHYLNATAGTCEEMIKRAVFARELGAPIVMHDYLTGGFTANTTLAHYCRDNGLLLHIHRAMHALIDRQKNHGMHFRVLAKALRLSGGDHIHAGTVVGKLEGERDITLGFVDLLRDDHTEIDDARGIYFTQSWVSTPGVLPVASGGIHVWHMPALTEIFGDDSVLQFGGGTLGHPWGNAPGRVANRVALEACVQARNEGRDLASEGNVIIREASKWSPELAAACEVWKEIKFEFPAVDVFHKGKKKN.

A propeptide spanning residues 1-2 (MS) is cleaved from the precursor. Proline 3 carries the N-acetylproline modification. Residue lysine 14 is modified to N6,N6,N6-trimethyllysine. Positions 123 and 173 each coordinate substrate. Lysine 175 functions as the Proton acceptor in the catalytic mechanism. Lysine 177 contacts substrate. Residues lysine 201, aspartate 203, and glutamate 204 each contribute to the Mg(2+) site. At lysine 201 the chain carries N6-carboxylysine. Histidine 294 serves as the catalytic Proton acceptor. Substrate-binding residues include arginine 295, histidine 327, and serine 379.

It belongs to the RuBisCO large chain family. Type I subfamily. As to quaternary structure, heterohexadecamer of 8 large chains and 8 small chains; disulfide-linked. The disulfide link is formed within the large subunit homodimers. Mg(2+) serves as cofactor. The disulfide bond which can form in the large chain dimeric partners within the hexadecamer appears to be associated with oxidative stress and protein turnover.

Its subcellular location is the plastid. It is found in the chloroplast. The catalysed reaction is 2 (2R)-3-phosphoglycerate + 2 H(+) = D-ribulose 1,5-bisphosphate + CO2 + H2O. The enzyme catalyses D-ribulose 1,5-bisphosphate + O2 = 2-phosphoglycolate + (2R)-3-phosphoglycerate + 2 H(+). In terms of biological role, ruBisCO catalyzes two reactions: the carboxylation of D-ribulose 1,5-bisphosphate, the primary event in carbon dioxide fixation, as well as the oxidative fragmentation of the pentose substrate in the photorespiration process. Both reactions occur simultaneously and in competition at the same active site. The chain is Ribulose bisphosphate carboxylase large chain from Phytolacca americana (American pokeweed).